A 113-amino-acid polypeptide reads, in one-letter code: Large ribosomal subunit protein uL24 (113 aa).

It belongs to the universal ribosomal protein uL24 family. As to quaternary structure, part of the 50S ribosomal subunit.

One of two assembly initiator proteins, it binds directly to the 5'-end of the 23S rRNA, where it nucleates assembly of the 50S subunit. Functionally, one of the proteins that surrounds the polypeptide exit tunnel on the outside of the subunit. The protein is Large ribosomal subunit protein uL24 of Chlamydia abortus (strain DSM 27085 / S26/3) (Chlamydophila abortus).